The following is a 723-amino-acid chain: Phenylalanine ammonia-lyase (723 aa).

Tyr-77 (proton donor/acceptor) is an active-site residue. Positions 182–184 (ASG) form a cross-link, 5-imidazolinone (Ala-Gly). A 2,3-didehydroalanine (Ser) modification is found at Ser-183. Residues Asn-241, Gln-336, Arg-342, Asn-372, Lys-443, Glu-471, and Asn-474 each contribute to the (E)-cinnamate site.

It belongs to the PAL/histidase family. In terms of processing, contains an active site 4-methylidene-imidazol-5-one (MIO), which is formed autocatalytically by cyclization and dehydration of residues Ala-Ser-Gly.

The protein resides in the cytoplasm. It carries out the reaction L-phenylalanine = (E)-cinnamate + NH4(+). The protein operates within secondary metabolite biosynthesis. It participates in phenylpropanoid metabolism; trans-cinnamate biosynthesis; trans-cinnamate from L-phenylalanine: step 1/1. Its function is as follows. Phenylalanine ammonia-lyase; part of the gene cluster that mediates the biosynthesis of squalestatin S1 (SQS1, also known as zaragozic acid A), a heavily oxidized fungal polyketide that offers potent cholesterol lowering activity by targeting squalene synthase (SS). SQS1 is composed of a 2,8-dioxobicyclic[3.2.1]octane-3,4,5-tricarboxyclic acid core that is connected to two lipophilic polyketide arms. These initial steps feature the priming of an unusual benzoic acid starter unit onto the highly reducing polyketide synthase clz14, followed by oxaloacetate extension and product release to generate a tricarboxylic acid containing product. The phenylalanine ammonia lyase (PAL) clz10 and the acyl-CoA ligase clz12 are involved in transforming phenylalanine into benzoyl-CoA. The citrate synthase-like protein clz17 is involved in connecting the C-alpha-carbons of the hexaketide chain and oxaloacetate to afford the tricarboxylic acid unit. The potential hydrolytic enzymes, clz11 and clz13, are in close proximity to pks2 and may participate in product release. On the other side, the tetraketide arm is synthesized by a the squalestatin tetraketide synthase clz2 and enzymatically esterified to the core in the last biosynthetic step, by the acetyltransferase clz6. The biosynthesis of the tetraketide must involve 3 rounds of chain extension. After the first and second rounds methyl-transfer occurs, and in all rounds of extension the ketoreductase and dehydratase are active. The enoyl reductase and C-MeT of clz2 are not active in the final round of extension. The acetyltransferase clz6 appears to have a broad substrate selectivity for its acyl CoA substrate, allowing the in vitro synthesis of novel squalestatins. The biosynthesis of SQS1 requires several oxidative steps likely performed by oxidoreductases clz3, clz15 and clz16. Finally, in support of the identification of the cluster as being responsible for SQS1 production, the cluster contains a gene encoding a putative squalene synthase (SS) clz20, suggesting a likely mechanism for self-resistance. The protein is Phenylalanine ammonia-lyase of Cochliobolus lunatus (Filamentous fungus).